Reading from the N-terminus, the 632-residue chain is Golgin subfamily A member 8O (632 aa).

The disordered stretch occupies residues 1–76; sequence MAEETQHNKL…TSSATLKDLE (76 aa). Residues 38–50 are compositionally biased toward polar residues; sequence TNGSIPETATSGG. Coiled coils occupy residues 85–150 and 209–421; these read VLDS…TDLY and ELEQ…SLMA. 3 disordered regions span residues 423–452, 505–524, and 552–612; these read PGEG…DPES, DAAL…DEGE, and NSAD…EHPG. The span at 427–440 shows a compositional bias: basic and acidic residues; it reads HGGEHLDSEGEEAP. The span at 508-520 shows a compositional bias: gly residues; sequence LGGGHHQAGAQGG. The segment covering 569 to 578 has biased composition (basic and acidic residues); it reads AADKHGDLRE.

The protein belongs to the GOLGA6 family.

The polypeptide is Golgin subfamily A member 8O (GOLGA8O) (Homo sapiens (Human)).